The sequence spans 424 residues: GTPase Obg (424 aa).

Residues 2 to 158 (AKFIDQVKIM…YEANIVLKIL (157 aa)) form the Obg domain. One can recognise an OBG-type G domain in the interval 159–326 (SDVGLVGLPS…LKKIIWEFLE (168 aa)). Residues 165–172 (GLPSCGKS), 190–194 (FTTLV), 211–214 (DLPG), 280–283 (NKSD), and 307–309 (SAL) contribute to the GTP site. The Mg(2+) site is built by S172 and T192. The OCT domain occupies 344–422 (KEINYEPDFV…IYQHKFEWEE (79 aa)).

The protein belongs to the TRAFAC class OBG-HflX-like GTPase superfamily. OBG GTPase family. As to quaternary structure, monomer. Mg(2+) serves as cofactor.

The protein localises to the cytoplasm. Its function is as follows. An essential GTPase which binds GTP, GDP and possibly (p)ppGpp with moderate affinity, with high nucleotide exchange rates and a fairly low GTP hydrolysis rate. Plays a role in control of the cell cycle, stress response, ribosome biogenesis and in those bacteria that undergo differentiation, in morphogenesis control. This chain is GTPase Obg, found in Mycoplasmopsis synoviae (strain 53) (Mycoplasma synoviae).